The primary structure comprises 77 residues: Conotoxin Ar5.1 a (77 aa).

The signal sequence occupies residues 1–19 (MLCLPVFIILLLLASPAAS). A propeptide spanning residues 20–44 (NPLETRIQSDLIRAALEDADMKNEK) is cleaved from the precursor.

Belongs to the conotoxin T superfamily. Post-translationally, contains 2 disulfide bonds that can be either 'C1-C3, C2-C4' or 'C1-C4, C2-C3', since these disulfide connectivities have been observed for conotoxins with cysteine framework V (for examples, see AC P0DQQ7 and AC P81755). In terms of tissue distribution, expressed by the venom duct.

It localises to the secreted. The protein is Conotoxin Ar5.1 a of Conus arenatus (Sand-dusted cone).